Reading from the N-terminus, the 609-residue chain is MTSATIPGLDTAPTNHQGLLSWVQEVAELTQPDRVVFADGSDEEFNRLAAELVEAGTLKKLNEKKHPNSYLALSDPSDVARVESRTYICTEEESGAGPTNNWMDPTEMRSIMTDLYRGCMRGRTMWVVPFCMGPLGVEDPKLGVEITDSEYVVISMKVMTRMGKAALEKMGDDGFFVKALHSVGAPLEPGQKDVPWPCNDTKYITHFPETREIWSYGSGYGGNALLGKKCYSLRIASAMAHDEGWLAEHMLILKLISPENKAYYFAAAFPSACGKTNLAMLQPTIPGWRAETLGDDIAWMRFGKDGRLYAVNPEFGFFGVAPGTNWKSNPNAMRTIEAGNTVFTNVALTDDNDVWWEGLEGQPEHLIDWKGNDWYAGKTETPAAHPNSRYCTPMSQCPILAPEWDDPQGVPISGILFGARRKTTVPLVTQARDWQHGVFMGATMGSEQTAAAEGKVGTVRRDPMAMLPFLGYHVGDYFQHWIDLGKNSDESKLPKVFFVNWFRRGDDGGFLWPGFGENSRVLKWIVDRIEHKAGGQDTPIGIVPKAEDLDLDGLDVSVDDVAKALAVNPDEWREELPQIEEWFEFVGEKLPTGVRDEFEALKQRLSEAG.

Residues Arg81 and 220–222 (YGG) contribute to the substrate site. 2 residues coordinate Mn(2+): Lys229 and His249. Residue Ser271 coordinates substrate. Residue 272-277 (ACGKTN) coordinates GTP. Residue Cys273 is part of the active site. Asp296 contributes to the Mn(2+) binding site. Substrate is bound at residue 387 to 389 (NSR). GTP contacts are provided by residues Arg389, Arg420, and 515 to 518 (FGEN).

This sequence belongs to the phosphoenolpyruvate carboxykinase [GTP] family. Monomer. Requires Mn(2+) as cofactor.

It is found in the cytoplasm. It catalyses the reaction oxaloacetate + GTP = phosphoenolpyruvate + GDP + CO2. It functions in the pathway carbohydrate biosynthesis; gluconeogenesis. In terms of biological role, catalyzes the conversion of oxaloacetate (OAA) to phosphoenolpyruvate (PEP), the rate-limiting step in the metabolic pathway that produces glucose from lactate and other precursors derived from the citric acid cycle. This Mycolicibacterium paratuberculosis (strain ATCC BAA-968 / K-10) (Mycobacterium paratuberculosis) protein is Phosphoenolpyruvate carboxykinase [GTP].